The sequence spans 326 residues: Acetyl-coenzyme A carboxylase carboxyl transferase subunit beta (326 aa).

Residues 25–308 (LWVKCPASGE…RRDDRSTLQL (284 aa)) form the CoA carboxyltransferase N-terminal domain. Residues 298–326 (RRRDDRSTLQLTPPKTHAPKPPEPKVKPD) form a disordered region. The span at 317–326 (KPPEPKVKPD) shows a compositional bias: basic and acidic residues.

This sequence belongs to the AccD/PCCB family. In terms of assembly, acetyl-CoA carboxylase is a heterohexamer composed of biotin carboxyl carrier protein (AccB), biotin carboxylase (AccC) and two subunits each of ACCase subunit alpha (AccA) and ACCase subunit beta (AccD).

It localises to the cytoplasm. It catalyses the reaction N(6)-carboxybiotinyl-L-lysyl-[protein] + acetyl-CoA = N(6)-biotinyl-L-lysyl-[protein] + malonyl-CoA. It functions in the pathway lipid metabolism; malonyl-CoA biosynthesis; malonyl-CoA from acetyl-CoA: step 1/1. Component of the acetyl coenzyme A carboxylase (ACC) complex. Biotin carboxylase (BC) catalyzes the carboxylation of biotin on its carrier protein (BCCP) and then the CO(2) group is transferred by the transcarboxylase to acetyl-CoA to form malonyl-CoA. The protein is Acetyl-coenzyme A carboxylase carboxyl transferase subunit beta of Hyphomonas neptunium (strain ATCC 15444).